We begin with the raw amino-acid sequence, 451 residues long: Phosphoglucosamine mutase (451 aa).

The active-site Phosphoserine intermediate is Ser102. Mg(2+) contacts are provided by Ser102, Asp242, Asp244, and Asp246. Ser102 bears the Phosphoserine mark.

The protein belongs to the phosphohexose mutase family. The cofactor is Mg(2+). Activated by phosphorylation.

It catalyses the reaction alpha-D-glucosamine 1-phosphate = D-glucosamine 6-phosphate. Its function is as follows. Catalyzes the conversion of glucosamine-6-phosphate to glucosamine-1-phosphate. The chain is Phosphoglucosamine mutase from Staphylococcus epidermidis (strain ATCC 35984 / DSM 28319 / BCRC 17069 / CCUG 31568 / BM 3577 / RP62A).